The following is a 30-amino-acid chain: Cycloviolacin-H3 (30 aa).

Residues 1–30 (GLPVCGETCFGGTCNTPGCICDPWPVCTRN) constitute a cross-link (cyclopeptide (Gly-Asn)). 3 disulfides stabilise this stretch: Cys5–Cys19, Cys9–Cys21, and Cys14–Cys27.

Post-translationally, this is a cyclic peptide.

Its function is as follows. Probably participates in a plant defense mechanism. In Viola hederacea (Australian violet), this protein is Cycloviolacin-H3.